The sequence spans 284 residues: 2-dehydro-3-deoxyphosphooctonate aldolase (284 aa).

This sequence belongs to the KdsA family.

The protein localises to the cytoplasm. The enzyme catalyses D-arabinose 5-phosphate + phosphoenolpyruvate + H2O = 3-deoxy-alpha-D-manno-2-octulosonate-8-phosphate + phosphate. The protein operates within carbohydrate biosynthesis; 3-deoxy-D-manno-octulosonate biosynthesis; 3-deoxy-D-manno-octulosonate from D-ribulose 5-phosphate: step 2/3. Its pathway is bacterial outer membrane biogenesis; lipopolysaccharide biosynthesis. This is 2-dehydro-3-deoxyphosphooctonate aldolase from Mannheimia succiniciproducens (strain KCTC 0769BP / MBEL55E).